The sequence spans 604 residues: Glucose oxidase (604 aa).

An N-terminal signal peptide occupies residues Met-1 to Ala-18. 3 residues coordinate FAD: Leu-52, Thr-53, and Glu-73. An N-linked (GlcNAc...) asparagine glycan is attached at Asn-111. FAD contacts are provided by Ser-125, Asn-129, Gly-130, and Ser-132. A disulfide bond links Cys-186 and Cys-228. N-linked (GlcNAc...) asparagine glycosylation occurs at Asn-213. FAD is bound at residue Val-272. 3 N-linked (GlcNAc...) asparagine glycosylation sites follow: Asn-278, Asn-409, and Asn-531. His-537 serves as the catalytic Proton acceptor. Positions 558 and 559 each coordinate O2. 2 residues coordinate FAD: Gly-570 and Met-582.

Belongs to the GMC oxidoreductase family. As to quaternary structure, homodimer. It depends on FAD as a cofactor.

It localises to the secreted. The protein resides in the cell wall. Its subcellular location is the cytoplasm. The protein localises to the extracellular space. It is found in the extracellular matrix. The enzyme catalyses beta-D-glucose + O2 = D-glucono-1,5-lactone + H2O2. Its function is as follows. Glucose oxidase catalyzes the oxidation of beta-D-glucose to D-glucono-delta-lactone and hydrogen peroxide in the presence of molecular oxygen. The enzyme also catalyzes the reaction with D-xylose but at a much lower rate. Shows any activities against D-fructose, D-galactose and D-arabinose. The enzyme is cytotoxic for a series of bacteria, yeasts and filamentous fungi and acts primarily via the liberation of H(2)O(2), which is a harmful oxidative stress-generating agent. The protein is Glucose oxidase of Penicillium chrysogenum (Penicillium notatum).